Reading from the N-terminus, the 600-residue chain is UvrABC system protein C (600 aa).

The 86-residue stretch at 15–100 (NSAGVYEYFN…IKQLHPKYNI (86 aa)) folds into the GIY-YIG domain. One can recognise a UVR domain in the interval 203–238 (SVLLKNLEKQMLVLAQNENYEEAAKIRDQIATIKDL).

This sequence belongs to the UvrC family. Interacts with UvrB in an incision complex.

It localises to the cytoplasm. The UvrABC repair system catalyzes the recognition and processing of DNA lesions. UvrC both incises the 5' and 3' sides of the lesion. The N-terminal half is responsible for the 3' incision and the C-terminal half is responsible for the 5' incision. This is UvrABC system protein C from Campylobacter jejuni subsp. doylei (strain ATCC BAA-1458 / RM4099 / 269.97).